Reading from the N-terminus, the 907-residue chain is MLASLIGGIFGTKNERELKRMRKIVEQINALEPTISALSDADLSAKTPEFKQRYNNGESLDKLLPEAFAVCREAAKRVMGMRHYDVQLIGGITLHEGKIAEMRTGEGKTLMGTLACYLNALSGEGVHVITVNDYLAQRDAELNRPLFEFLGLSIGTIYSMQEPAEKAAAYLADITYGTNNEFGFDYLRDNMVFSLAEKKQRGLHYAIIDEVDSILIDEARTPLIISGQSEDSSHLYTAINTIPPKLRPQKEEKVADGGHFWIDEKQRSVEMTEIGYETVEQELIQMGLLAEGESLYSATNLNLVHHVSAAIRAHFLFQRDVHYIIHDGEVIIVDEHTGRTMPGRRWSEGLHQAVEAKEGLAIQPENQTLATTTFQNYFRLYKKLSGMTGTADTEAAEMKEIYGLDVVIIPTHRPMIRNDQNDLIYLNRNGKYNAIIQEIMNIRQQGVAPILIGTATIEASEILSSKLKQAGIHHEVLNAKQHEREADIIAQAGSPNAVTIATNMAGRGTDIILGGNWKAKLAKLENPTPEDEARLKAQWEQDHEDVLQAGGLHIIGSERHESRRIDNQLRGRAGRQGDPGVSRFYLSLEDDLMRIFAGDRVVAMMRAMGLKEDEAIEHKMVSRSIENAQRKVEARNFDIRKNLLKYDDVNNEQRKIIYSQRDEILAENTLQEYVEEMHREVMQAMIANFIPPESIHDQWDVEGLENALRIDLGIELPVQEWLEQDRRLDEEGLVERISDEVIARYRQRRAQMGDESAAMLERHFVLNSLDRHWKDHLAAMDYLRQGIHLRGYAQKNPEQEYKKEAFNLFVNMLGVIKTDVVTDLSRVHIPTPEELAEMEAQQQQQAEAMKLSFEHDDVDGLTGEVTASQEALNDSATEQQTFPVPESRNAPCPCGSGLKYKQCHGKI.

Residues Q87, 105-109 (GEGKT), and D510 each bind ATP. Zn(2+)-binding residues include C892, C894, C903, and H904.

This sequence belongs to the SecA family. As to quaternary structure, monomer and homodimer. Part of the essential Sec protein translocation apparatus which comprises SecA, SecYEG and auxiliary proteins SecDF-YajC and YidC. Zn(2+) serves as cofactor.

The protein resides in the cell inner membrane. It is found in the cytoplasm. The enzyme catalyses ATP + H2O + cellular proteinSide 1 = ADP + phosphate + cellular proteinSide 2.. Its function is as follows. Part of the Sec protein translocase complex. Interacts with the SecYEG preprotein conducting channel. Has a central role in coupling the hydrolysis of ATP to the transfer of proteins into and across the cell membrane, serving both as a receptor for the preprotein-SecB complex and as an ATP-driven molecular motor driving the stepwise translocation of polypeptide chains across the membrane. In Acinetobacter baumannii (strain AB0057), this protein is Protein translocase subunit SecA.